A 405-amino-acid chain; its full sequence is L-rhamnonate dehydratase (405 aa).

His-33 and Arg-59 together coordinate substrate. Mg(2+) is bound by residues Asp-226, Glu-252, and Glu-280. His-329 serves as the catalytic Proton acceptor. Glu-349 contacts substrate.

Belongs to the mandelate racemase/muconate lactonizing enzyme family. RhamD subfamily. Homooctamer; tetramer of dimers. It depends on Mg(2+) as a cofactor.

It catalyses the reaction L-rhamnonate = 2-dehydro-3-deoxy-L-rhamnonate + H2O. In terms of biological role, catalyzes the dehydration of L-rhamnonate to 2-keto-3-deoxy-L-rhamnonate (KDR). This chain is L-rhamnonate dehydratase, found in Salmonella paratyphi A (strain AKU_12601).